Consider the following 643-residue polypeptide: Mitochondrial Rho GTPase 2 (643 aa).

Residues 1–611 are Cytoplasmic-facing; the sequence is MMLGGKSSAG…SGRRSRNIRQ (611 aa). Residues 12 to 179 enclose the Miro 1 domain; it reads RTSLRVAVAG…FYFASKAVLH (168 aa). EF-hand domains lie at 195–230 and 315–350; these read RLRR…CFGA and EAMD…APDS. Positions 208, 210, 212, 219, 328, 330, 332, and 339 each coordinate Ca(2+). The Miro 2 domain occupies 423–592; that stretch reads RNVFQCFVFG…FSRIVSTAEN (170 aa). The helical transmembrane segment at 612–632 threads the bilayer; the sequence is LVNSSLLFVSVGTAVGFAGLA. Over 633–643 the chain is Mitochondrial intermembrane; sequence AYRAYSARKNA.

The protein belongs to the mitochondrial Rho GTPase family. Expressed roots, rosette and cauline leaves, stems, flowers and siliques.

Its subcellular location is the mitochondrion outer membrane. With respect to regulation, activated by calcium. Calcium-binding mitochondrial GTPase involved in calcium signaling during salt stress response. May play a role in the progression of embryonic cell division, development of haploid male and female gametes, and pollen tube growth. This chain is Mitochondrial Rho GTPase 2, found in Arabidopsis thaliana (Mouse-ear cress).